A 640-amino-acid polypeptide reads, in one-letter code: Acid beta-fructofuranosidase 2, vacuolar (640 aa).

The tract at residues 1-22 (MDTNTTSYTPLPGDPFLSGPPE) is disordered. The Cytoplasmic portion of the chain corresponds to 1 to 29 (MDTNTTSYTPLPGDPFLSGPPETPRRPLK). Residues 1-78 (MDTNTTSYTP…HPQSTTNTML (78 aa)) constitute a propeptide, removed in mature form. Residues 30–49 (GFAVIFASVIFLMSLVALII) traverse the membrane as a helical segment. At 50–616 (HQGPQQPPDV…FSPDAASHSS (567 aa)) the chain is on the lumenal side. Substrate is bound by residues 93-96 (WMND), glutamine 112, tryptophan 120, 155-156 (WT), 219-220 (RD), glutamate 274, and aspartate 307. The active site involves aspartate 96. Residues cysteine 464 and cysteine 512 are joined by a disulfide bond. A helical transmembrane segment spans residues 617–639 (FTPVTVFIKFIVPFGIFLTLYFV). Arginine 640 is a topological domain (cytoplasmic).

This sequence belongs to the glycosyl hydrolase 32 family. Expressed in buds, stems, roots and leaves.

Its subcellular location is the membrane. The protein localises to the vacuole membrane. The enzyme catalyses Hydrolysis of terminal non-reducing beta-D-fructofuranoside residues in beta-D-fructofuranosides.. Vacuolar invertase. This chain is Acid beta-fructofuranosidase 2, vacuolar, found in Rosa hybrid cultivar.